The chain runs to 59 residues: UPF0181 protein YoaH (59 aa).

Belongs to the UPF0181 family.

This is UPF0181 protein YoaH from Shigella flexneri.